Reading from the N-terminus, the 181-residue chain is Minor capsid protein P4 (181 aa).

Interacts with the major capsid protein.

It localises to the virion. One of the minor capsid proteins that constitute a network internal to the major capsid proteins and outside the lipid membrane. The minor capsid proteins glue and stabilize the capsomers. This Chlorella (PBCV-1) protein is Minor capsid protein P4.